We begin with the raw amino-acid sequence, 161 residues long: Cytochrome c-type biogenesis protein CcmE (161 aa).

Residues 1–8 lie on the Cytoplasmic side of the membrane; sequence MNARRKKR. A helical; Signal-anchor for type II membrane protein membrane pass occupies residues 9 to 29; sequence LALATALIGGVAAIASLLLYA. At 30–161 the chain is on the periplasmic side; that stretch reads LNSNLNLFYT…EYDSTQKTGY (132 aa). Heme-binding residues include H131 and Y135.

It belongs to the CcmE/CycJ family.

It localises to the cell inner membrane. In terms of biological role, heme chaperone required for the biogenesis of c-type cytochromes. Transiently binds heme delivered by CcmC and transfers the heme to apo-cytochromes in a process facilitated by CcmF and CcmH. The sequence is that of Cytochrome c-type biogenesis protein CcmE from Shewanella loihica (strain ATCC BAA-1088 / PV-4).